The sequence spans 439 residues: MNSPANSSAARPAAGPKSVAAFQRASALMPGGVNSPARAFGAVGGTPLFIERAEGPYLYDIDGNRYIDYIGSWGPMILGHAHPEVINAITQAAAKGTSYGAPTEAESRLAEQIIEAVPSIEKVRLVNSGTEATMSALRVARGATGRKKVIKFAGNYHGHVDSLLVAAGSAAATLGAPDSPGVTPGAAEDTLVLSYNDVSGLQNAFAQHGDDIAALILEPVVGNMGCVLPTMEFLNAARDLTTKHGSILIFDEVMTGFRVAYGGAQERFGVTPDMTTLGKIVGGGMPLGAYGGRADIMNQVLPAGKVFQAGTLSGNPVAVAAGSATLRLLKENPPYEQLERLADRLADGLDRAATSAGMAHTVAKAGAMLTLFFNPEPVDCWAVADRCDREAFGRYFWGLIDEGIYMPCSQFEALFFSQQHTEAMIDETIAAAEKVLKSL.

An N6-(pyridoxal phosphate)lysine modification is found at Lys279.

The protein belongs to the class-III pyridoxal-phosphate-dependent aminotransferase family. HemL subfamily. Homodimer. Pyridoxal 5'-phosphate serves as cofactor.

The protein localises to the cytoplasm. It carries out the reaction (S)-4-amino-5-oxopentanoate = 5-aminolevulinate. Its pathway is porphyrin-containing compound metabolism; protoporphyrin-IX biosynthesis; 5-aminolevulinate from L-glutamyl-tRNA(Glu): step 2/2. The chain is Glutamate-1-semialdehyde 2,1-aminomutase from Rhodopirellula baltica (strain DSM 10527 / NCIMB 13988 / SH1).